We begin with the raw amino-acid sequence, 59 residues long: Embryonic testis differentiation protein homolog A (59 aa).

The segment covering 1-10 has biased composition (basic and acidic residues); it reads MDKEVPKGSP. A disordered region spans residues 1 to 25; it reads MDKEVPKGSPREPALNIKKSDKSFK.

In Homo sapiens (Human), this protein is Embryonic testis differentiation protein homolog A.